We begin with the raw amino-acid sequence, 326 residues long: MKKIPLGTTDITLSRMGLGTWAIGGGPAWNGDLDRQICIDTILEAHRCGINLIDTAPGYNFGNSEVIVGQALKKLPREQVVVETKCGIVWERKGSLFNKVGDRQLYKNLSPESIREEVAASLQRLGIDYIDIYMTHWQSVPPFFTPIAETVAVLNELKSEGKIRAIGAANVDADHIREYLQYGELDIIQAKYSILDRAMENELLPLCRDNGIVVQVYSPLEQGLLTGTITRDYVPGGARANKVWFQRENMLKVIDMLEQWQPLCARYQCTIPTLALAWILKQSDLISILSGATAPEQVRENVAALNINLSDADATLMREMAEALER.

Residues 20–21 and aspartate 54 contribute to the NAD(+) site; that span reads TW. Tyrosine 59 functions as the Proton donor in the catalytic mechanism. Residues glutamine 189, 217–222, glycine 291, and glutamine 297 contribute to the NAD(+) site; that span reads YSPLEQ.

This sequence belongs to the aldo/keto reductase family. Aldo/keto reductase 11 subfamily. Monomer.

The enzyme catalyses hydroxyacetone + NAD(+) = methylglyoxal + NADH + H(+). Its function is as follows. Catalyzes the NADH-dependent reduction of methylglyoxal (2-oxopropanal) in vitro. It is not known if this activity has physiological significance. Cannot use NADPH as a cosubstrate. Seems to play some role in intestinal colonization. In Escherichia coli (strain K12), this protein is NADH-specific methylglyoxal reductase (ydjG).